The primary structure comprises 254 residues: MAISGVPVLGFFIIAVLMSAQESWAIKEEHVIIQAEFYLNPDQSGEFMFDFDGDEIFHVDMAKKETVWRLEEFGRFASFEAQGALANIAVDKANLEIMTKRSNYTPITNVPPEVTVLTNSPVELREPNVLICFIDKFTPPVVNVTWLRNGKPVTTGVSETVFLPREDHLFRKFHYLPFLPSTEDVYDCRVEHWGLDEPLLKHWEFDAPSPLPETTENVVCALGLTVGLVGIIIGTIFIIKGLRKSNAAERRGPL.

The signal sequence occupies residues 1–25 (MAISGVPVLGFFIIAVLMSAQESWA). Residues 26 to 109 (IKEEHVIIQA…KRSNYTPITN (84 aa)) form an alpha-1 region. At 26-216 (IKEEHVIIQA…APSPLPETTE (191 aa)) the chain is on the extracellular side. N-linked (GlcNAc...) asparagine glycosylation is found at Asn-103 and Asn-143. An alpha-2 region spans residues 110-203 (VPPEVTVLTN…GLDEPLLKHW (94 aa)). The Ig-like C1-type domain occupies 112-204 (PEVTVLTNSP…LDEPLLKHWE (93 aa)). An intrachain disulfide couples Cys-132 to Cys-188. The interval 204-216 (EFDAPSPLPETTE) is connecting peptide. A helical transmembrane segment spans residues 217–239 (NVVCALGLTVGLVGIIIGTIFII). The Cytoplasmic segment spans residues 240–254 (KGLRKSNAAERRGPL). A Glycyl lysine isopeptide (Lys-Gly) (interchain with G-Cter in ubiquitin) cross-link involves residue Lys-244.

The protein belongs to the MHC class II family. Heterotrimer that consists of an alpha chain HLA-DRA, a beta chain HLA-DRB and a peptide (peptide-MHCII). Newly synthesized alpha and beta chains forms a heterodimer (MHCII) that associates with the CD74/invariant chain (Ii) in the endoplasmic reticulum (ER). Ii is a trimer composed of three subunits and each subunit interacts with one MHCII dimer, blocking the peptide-binding cleft. As a result, MHCII molecules cannot bind peptides present in the ER. The complex of MHCII and CD74/Ii is transported in vesicles from ER to Golgi to lysosomes, where it encounters antigenic peptides generated via proteolysis of endocytosed antigens. MHCII dimers are dissociated from CD74/Ii by the combined action of proteolysis and HLA-DM. Lysosomal enzymes such as cathepsin, degrade CD74/Ii leaving a 24 amino acid remnant called class II-associated Ii or CLIP. Interacts (via the peptide binding cleft) with CLIP; this interaction inhibits antigen peptide binding before entry in the endosomal compartment. The displacement of CLIP and replacement by a high affinity peptide in lysosomes is performed by HLA-DM heterodimer. HLA-DM catalyzes CLIP dissociation from MHCII, stabilizes empty MHCII and mediates the selection of high affinity peptides. Interacts with HLA-DM heterodimer; this interaction is direct. Interacts (via alpha-1 domain) with TCR (via CDRs). Interacts (via alpha-2 domain) with CD4 (via Ig-like V-type domain); this interaction increases the affinity of TCR for peptide-MHCII. In terms of assembly, (Microbial infection) Interacts with Epstein-Barr virus BZLF2/gp42. As to quaternary structure, (Microbial infection) Interacts with Staphylococcus aureus enterotoxin A/entA, enterotoxin B/entB, enterotoxin C1/entC1, enterotoxin D/entD, and enterotoxin H/entH. In terms of processing, ubiquitinated by MARCHF1 or MARCHF8 at Lys-244 leading to down-regulation of MHCII. When associated with ubiquitination of the beta chain at 'Lys-254', the down-regulation of MHCII may be highly effective. As to expression, expressed in professional APCs: macrophages, dendritic cells and B cells (at protein level). Expressed in thymic epithelial cells (at protein level).

The protein localises to the cell membrane. It is found in the endoplasmic reticulum membrane. The protein resides in the early endosome membrane. It localises to the late endosome membrane. Its subcellular location is the lysosome membrane. The protein localises to the autolysosome membrane. An alpha chain of antigen-presenting major histocompatibility complex class II (MHCII) molecule. In complex with the beta chain HLA-DRB, displays antigenic peptides on professional antigen presenting cells (APCs) for recognition by alpha-beta T cell receptor (TCR) on HLA-DR-restricted CD4-positive T cells. This guides antigen-specific T-helper effector functions, both antibody-mediated immune response and macrophage activation, to ultimately eliminate the infectious agents and transformed cells. Typically presents extracellular peptide antigens of 10 to 30 amino acids that arise from proteolysis of endocytosed antigens in lysosomes. In the tumor microenvironment, presents antigenic peptides that are primarily generated in tumor-resident APCs likely via phagocytosis of apoptotic tumor cells or macropinocytosis of secreted tumor proteins. Presents peptides derived from intracellular proteins that are trapped in autolysosomes after macroautophagy, a mechanism especially relevant for T cell selection in the thymus and central immune tolerance. The selection of the immunodominant epitopes follows two processing modes: 'bind first, cut/trim later' for pathogen-derived antigenic peptides and 'cut first, bind later' for autoantigens/self-peptides. The anchor residue at position 1 of the peptide N-terminus, usually a large hydrophobic residue, is essential for high affinity interaction with MHCII molecules. This is HLA class II histocompatibility antigen, DR alpha chain (HLA-DRA) from Homo sapiens (Human).